The following is a 717-amino-acid chain: F-box only protein 42 (717 aa).

Residues 1 to 30 (MASSSDSEDDSFMAVDQEETVLEGTMDQDE) show a composition bias toward acidic residues. Residues 1–34 (MASSSDSEDDSFMAVDQEETVLEGTMDQDEEPHP) are disordered. Residues 44–93 (NRSMSELPEEVLEYILSFLSPYQEHKTAALVCKQWYRLIKGVAHQCYHGF) form the F-box domain. Kelch repeat units lie at residues 132-184 (SMYV…VYKD), 186-242 (LVLF…VIDD), 244-293 (MIVF…VIDD), and 295-342 (TILI…LWCH). A disordered region spans residues 361 to 474 (RAPLSPSLNS…PSTPSAPEGY (114 aa)). Residues 363–376 (PLSPSLNSRPSPIS) are compositionally biased toward low complexity. 2 positions are modified to phosphoserine: S365 and S373. A Phosphothreonine modification is found at T378. 2 stretches are compositionally biased toward polar residues: residues 416 to 426 (QRQTPSGSREG) and 455 to 469 (SLDS…STPS). A Phosphoserine modification is found at S552. A compositionally biased stretch (low complexity) spans 570–596 (GPSASAALSPPLGSSPGSPGSQSLSSG). The interval 570–631 (GPSASAALSP…GHHPPQSLNV (62 aa)) is disordered.

As to quaternary structure, component of some SCF complex, composed of CUL1, SKP1, RBX1 and FBXO42. Interacts (via the kelch domain) with p53/TP53; interaction is direct.

Substrate-recognition component of some SCF (SKP1-CUL1-F-box protein)-type E3 ubiquitin ligase complex. Specifically recognizes p53/TP53, promoting its ubiquitination and degradation. This is F-box only protein 42 (FBXO42) from Homo sapiens (Human).